The chain runs to 559 residues: Dihydroxy-acid dehydratase (559 aa).

Aspartate 80 is a binding site for Mg(2+). Cysteine 121 is a [2Fe-2S] cluster binding site. Residues aspartate 122 and lysine 123 each coordinate Mg(2+). Lysine 123 is modified (N6-carboxylysine). A [2Fe-2S] cluster-binding site is contributed by cysteine 194. Glutamate 447 is a Mg(2+) binding site. Serine 473 serves as the catalytic Proton acceptor.

This sequence belongs to the IlvD/Edd family. Homodimer. It depends on [2Fe-2S] cluster as a cofactor. The cofactor is Mg(2+).

The catalysed reaction is (2R)-2,3-dihydroxy-3-methylbutanoate = 3-methyl-2-oxobutanoate + H2O. It catalyses the reaction (2R,3R)-2,3-dihydroxy-3-methylpentanoate = (S)-3-methyl-2-oxopentanoate + H2O. The protein operates within amino-acid biosynthesis; L-isoleucine biosynthesis; L-isoleucine from 2-oxobutanoate: step 3/4. Its pathway is amino-acid biosynthesis; L-valine biosynthesis; L-valine from pyruvate: step 3/4. Functions in the biosynthesis of branched-chain amino acids. Catalyzes the dehydration of (2R,3R)-2,3-dihydroxy-3-methylpentanoate (2,3-dihydroxy-3-methylvalerate) into 2-oxo-3-methylpentanoate (2-oxo-3-methylvalerate) and of (2R)-2,3-dihydroxy-3-methylbutanoate (2,3-dihydroxyisovalerate) into 2-oxo-3-methylbutanoate (2-oxoisovalerate), the penultimate precursor to L-isoleucine and L-valine, respectively. The sequence is that of Dihydroxy-acid dehydratase from Chlorobium chlorochromatii (strain CaD3).